The following is a 214-amino-acid chain: Putative pyrophosphatase PpaX (214 aa).

Asp-8 acts as the Nucleophile in catalysis.

The protein belongs to the HAD-like hydrolase superfamily. PpaX family. Mg(2+) serves as cofactor.

The catalysed reaction is diphosphate + H2O = 2 phosphate + H(+). The sequence is that of Putative pyrophosphatase PpaX from Clostridium perfringens (strain 13 / Type A).